We begin with the raw amino-acid sequence, 344 residues long: Phosphoribosylformylglycinamidine cyclo-ligase (344 aa).

This sequence belongs to the AIR synthase family.

Its subcellular location is the cytoplasm. It carries out the reaction 2-formamido-N(1)-(5-O-phospho-beta-D-ribosyl)acetamidine + ATP = 5-amino-1-(5-phospho-beta-D-ribosyl)imidazole + ADP + phosphate + H(+). It functions in the pathway purine metabolism; IMP biosynthesis via de novo pathway; 5-amino-1-(5-phospho-D-ribosyl)imidazole from N(2)-formyl-N(1)-(5-phospho-D-ribosyl)glycinamide: step 2/2. The chain is Phosphoribosylformylglycinamidine cyclo-ligase from Bifidobacterium animalis subsp. lactis (strain AD011).